The following is a 561-amino-acid chain: Transmembrane protein 151B (561 aa).

Residues 1-10 show a composition bias toward low complexity; that stretch reads MSPPGSAAGE. The segment at 1–42 is disordered; that stretch reads MSPPGSAAGESAGGGGGGGGSGVPEEPMASADEGPAREEQRP. Residues 11-22 are compositionally biased toward gly residues; sequence SAGGGGGGGGSG. The next 2 helical transmembrane spans lie at 59–79 and 106–126; these read CLLLSLLMYGCLGAVAWCHVT and YVYIPLAFLLMLYAVYLVECW. A compositionally biased stretch (polar residues) spans 489-507; that stretch reads VNEASCPTEQTRLSSQASM. The tract at residues 489–523 is disordered; sequence VNEASCPTEQTRLSSQASMRDNEEDEDEEEAGPPP. The span at 510–519 shows a compositional bias: acidic residues; that stretch reads NEEDEDEEEA.

Belongs to the TMEM151 family.

The protein resides in the membrane. This chain is Transmembrane protein 151B (Tmem151b), found in Mus musculus (Mouse).